The sequence spans 194 residues: dTTP/UTP pyrophosphatase (194 aa).

Residue aspartate 68 is the Proton acceptor of the active site.

It belongs to the Maf family. YhdE subfamily. Requires a divalent metal cation as cofactor.

It localises to the cytoplasm. The enzyme catalyses dTTP + H2O = dTMP + diphosphate + H(+). It carries out the reaction UTP + H2O = UMP + diphosphate + H(+). Its function is as follows. Nucleoside triphosphate pyrophosphatase that hydrolyzes dTTP and UTP. May have a dual role in cell division arrest and in preventing the incorporation of modified nucleotides into cellular nucleic acids. This is dTTP/UTP pyrophosphatase from Clostridioides difficile (strain 630) (Peptoclostridium difficile).